Reading from the N-terminus, the 260-residue chain is 3-methyl-2-oxobutanoate hydroxymethyltransferase (260 aa).

Mg(2+)-binding residues include D44 and D83. Residues 44–45 (DS), D83, and K113 contribute to the 3-methyl-2-oxobutanoate site. E115 contacts Mg(2+). The Proton acceptor role is filled by E183.

It belongs to the PanB family. As to quaternary structure, homodecamer; pentamer of dimers. The cofactor is Mg(2+).

It localises to the cytoplasm. The catalysed reaction is 3-methyl-2-oxobutanoate + (6R)-5,10-methylene-5,6,7,8-tetrahydrofolate + H2O = 2-dehydropantoate + (6S)-5,6,7,8-tetrahydrofolate. Its pathway is cofactor biosynthesis; (R)-pantothenate biosynthesis; (R)-pantoate from 3-methyl-2-oxobutanoate: step 1/2. Catalyzes the reversible reaction in which hydroxymethyl group from 5,10-methylenetetrahydrofolate is transferred onto alpha-ketoisovalerate to form ketopantoate. The protein is 3-methyl-2-oxobutanoate hydroxymethyltransferase of Gloeobacter violaceus (strain ATCC 29082 / PCC 7421).